We begin with the raw amino-acid sequence, 59 residues long: Small, acid-soluble spore protein H (59 aa).

Belongs to the SspH family.

Its subcellular location is the spore core. The polypeptide is Small, acid-soluble spore protein H (Bacillus thuringiensis subsp. konkukian (strain 97-27)).